A 229-amino-acid polypeptide reads, in one-letter code: Flagellar L-ring protein (229 aa).

The N-terminal stretch at 1–25 (MKQVRLPSSATVRAACAVAVAALAG) is a signal peptide. C26 is lipidated: N-palmitoyl cysteine. A lipid anchor (S-diacylglycerol cysteine) is attached at C26.

It belongs to the FlgH family. In terms of assembly, the basal body constitutes a major portion of the flagellar organelle and consists of four rings (L,P,S, and M) mounted on a central rod.

It is found in the cell outer membrane. The protein resides in the bacterial flagellum basal body. Its function is as follows. Assembles around the rod to form the L-ring and probably protects the motor/basal body from shearing forces during rotation. The polypeptide is Flagellar L-ring protein (Burkholderia orbicola (strain AU 1054)).